The chain runs to 247 residues: 5-oxoprolinase subunit A (247 aa).

The protein belongs to the LamB/PxpA family. As to quaternary structure, forms a complex composed of PxpA, PxpB and PxpC.

It catalyses the reaction 5-oxo-L-proline + ATP + 2 H2O = L-glutamate + ADP + phosphate + H(+). In terms of biological role, catalyzes the cleavage of 5-oxoproline to form L-glutamate coupled to the hydrolysis of ATP to ADP and inorganic phosphate. This is 5-oxoprolinase subunit A from Histophilus somni (strain 129Pt) (Haemophilus somnus).